The following is a 577-amino-acid chain: F-box-like/WD repeat-containing protein TBL1X (577 aa).

The region spanning 55–87 (TSDEVNFLVYRYLQESGFSHSAFTFGIESHISQ) is the LisH domain. Residues 92–137 (GTLVPPAALISILQKGLQYVEAEISINEDGTVFDGRPIESLSLIDA) enclose the F-box-like domain. Lys153 bears the N6-acetyllysine mark. Residues 177-202 (TTSAGVSHQNPSKNREATVNGEENRA) form a disordered region. A Phosphoserine modification is found at Ser183. 8 WD repeats span residues 230 to 269 (GHESEVFICAWNPVSDLLASGSGDSTARIWNLNENSNGGS), 286 to 325 (PSNKDVTSLDWNTNGTLLATGSYDGFARIWTEDGNLASTL), 327 to 366 (QHKGPIFALKWNRKGNYILSAGVDKTTIIWDAHTGEAKQQ), 369 to 409 (FHSA…KTFQ), 410 to 449 (GHTNEVNAIKWDPSGMLLASCSDDMTLKIWSMKQEVCIHD), 452 to 500 (AHNK…CTHT), 503 to 542 (KHQEPVYSVAFSPDGKYLASGSFDKCVHIWNTQSGNLVHS), and 544 to 576 (RGTGGIFEVCWNARGDKVGASASDGSVCVLDLR). A Glycyl lysine isopeptide (Lys-Gly) (interchain with G-Cter in SUMO2) cross-link involves residue Lys340.

It belongs to the WD repeat EBI family. In terms of assembly, homotetramer; dimer of dimers. Component of the N-Cor repressor complex, at least composed of NCOR1, NCOR2, HDAC3, TBL1X, TBL1R, CORO2A and GPS2. Interacts with GPS2 (when sumoylated); leading to protect GPS2 against degradation by the proteasome. Component of a E3 ubiquitin ligase complex containing UBE2D1, SIAH1, CACYBP/SIP, SKP1, APC and TBL1X. Probably part of other corepressor complexes, that do not contain NCOR1 and NCOR2. Interacts with histones H2B, H3a and H4. Interacts with MECP2; recruits TBL1X to the heterochromatin foci. Interacts with USP44. As to expression, ubiquitous.

The protein resides in the nucleus. F-box-like protein involved in the recruitment of the ubiquitin/19S proteasome complex to nuclear receptor-regulated transcription units. Plays an essential role in transcription activation mediated by nuclear receptors. Probably acts as integral component of corepressor complexes that mediates the recruitment of the 19S proteasome complex, leading to the subsequent proteasomal degradation of transcription repressor complexes, thereby allowing cofactor exchange. The sequence is that of F-box-like/WD repeat-containing protein TBL1X (TBL1X) from Homo sapiens (Human).